The primary structure comprises 156 residues: Toxin Res (156 aa).

It belongs to the MbcT/ParT/Res family. Homodimer. Forms a complex with cognate antitoxin Xre.

Its function is as follows. Toxic component of a type II toxin-antitoxin (TA) system. Expression in E.coli inhibits cell growth; bacteriostasis is neutralized by expression of cognate antitoxin Xre. Expression in E.coli leads to almost complete depletion of intracellular NAD(+): NAD(+) levels are partially restored when coexpressed with antitoxin Xre. The sequence is that of Toxin Res from Photorhabdus laumondii subsp. laumondii (strain DSM 15139 / CIP 105565 / TT01) (Photorhabdus luminescens subsp. laumondii).